A 343-amino-acid polypeptide reads, in one-letter code: 4-hydroxy-2-oxovalerate aldolase 2 (343 aa).

The region spanning 5-255 (ITIVDTTLRD…DTGVDLFPLI (251 aa)) is the Pyruvate carboxyltransferase domain. Substrate is bound by residues 13–14 (RD), Ser-167, and His-194. Residue Asp-14 coordinates Mn(2+). Mn(2+) is bound by residues His-194 and His-196. Tyr-285 contacts substrate.

It belongs to the 4-hydroxy-2-oxovalerate aldolase family.

It carries out the reaction (S)-4-hydroxy-2-oxopentanoate = acetaldehyde + pyruvate. This chain is 4-hydroxy-2-oxovalerate aldolase 2, found in Rhodococcus jostii (strain RHA1).